The following is a 55-amino-acid chain: Small ribosomal subunit protein bS21 (55 aa).

It belongs to the bacterial ribosomal protein bS21 family.

The polypeptide is Small ribosomal subunit protein bS21 (Phytoplasma mali (strain AT)).